Reading from the N-terminus, the 1171-residue chain is Pesticidal crystal protein Cry1Ea (1171 aa).

Residues 1094 to 1124 (ESNSSVHASVYEEKSYTDRRRENPCESNRGY) are disordered. Over residues 1103 to 1117 (VYEEKSYTDRRRENP) the composition is skewed to basic and acidic residues.

This sequence belongs to the delta endotoxin family.

In terms of biological role, promotes colloidosmotic lysis by binding to the midgut epithelial cells of many lepidopteran larvae including Spodoptera species. The sequence is that of Pesticidal crystal protein Cry1Ea (cry1Ea) from Bacillus thuringiensis subsp. kenyae.